A 547-amino-acid polypeptide reads, in one-letter code: Cdc42-interacting protein 4 (547 aa).

Residues 1–117 (MDWGTELWDQ…EMKQERKMHF (117 aa)) are required for translocation to the plasma membrane in response to insulin, podosome formation and interaction with AKAP9 and microtubules. In terms of domain architecture, F-BAR spans 1 to 264 (MDWGTELWDQ…AAESVDAKND (264 aa)). Residues 67-259 (FSQQQSFVQL…EGMKVAAESV (193 aa)) adopt a coiled-coil conformation. The interval 293 to 483 (RVPSDSSLGT…YTEFDEDFEE (191 aa)) is interaction with CDC42. Positions 293–547 (RVPSDSSLGT…PTSYLRVTLN (255 aa)) are interaction with PDE6G. Residues 294–323 (VPSDSSLGTPDGRPELRAASSRSRAKRWPF) are disordered. 3 positions are modified to phosphoserine: Ser-296, Ser-298, and Ser-299. Positions 332–425 (TEDFSHLPPE…ESRVLSNRGD (94 aa)) form a coiled coil. The 78-residue stretch at 337–414 (HLPPEQQRKR…VQKYEAWLAE (78 aa)) folds into the REM-1 domain. The segment at 415–547 (AESRVLSNRG…PTSYLRVTLN (133 aa)) is required for interaction with FASLG and localization to lysosomes. Residues 420–485 (LSNRGDSLSR…EFDEDFEEPA (66 aa)) form a disordered region. Position 426 is a phosphoserine (Ser-426). The interaction with DNM2 and WASL stretch occupies residues 431-487 (TRPPDPPTTAPPDSSSSSNNSGSQDNKESSEEPPSEEGQDTPIYTEFDEDFEEPASP). The span at 441 to 451 (PPDSSSSSNNS) shows a compositional bias: low complexity. An interaction with DNM1 and WASL region spans residues 476–547 (EFDEDFEEPA…PTSYLRVTLN (72 aa)). The interval 484–547 (PASPIGQCVA…PTSYLRVTLN (64 aa)) is required for podosome formation. An SH3 domain is found at 486–547 (SPIGQCVAIY…PTSYLRVTLN (62 aa)). Positions 490-547 (QCVAIYHFEGSSEGTVSMSEGEDLSLMEEDKGDGWTRVRRKQGGEGYVPTSYLRVTLN) are interaction with WAS. An interaction with ARHGAP17, DAAM1, DIAPH1 and DIAPH2 region spans residues 492–547 (VAIYHFEGSSEGTVSMSEGEDLSLMEEDKGDGWTRVRRKQGGEGYVPTSYLRVTLN).

Belongs to the FNBP1 family. As to quaternary structure, homodimerizes, the dimers can polymerize end-to-end to form filamentous structures. Interacts specifically with GTP-bound CDC42 and RHOQ. Interacts with AKAP9, ARHGAP17, DAAM1, DIAPH1, DIAPH2, DNM1, DNM2, FASLG/FASL, GAPVD1, LYN, microtubules, SRC, WAS/WASP and WASL/N-WASP. Interacts with the ligand binding domain of the thyroid receptor (TR) in the presence of thyroid hormone. May interact with CTNNB1 and HD/HTT. Interacts with PDE6G. Expressed in adrenal gland, aorta, brain, heart, kidney, liver, skeletal muscle and spleen.

The protein localises to the cytoplasm. It localises to the cytoskeleton. It is found in the cell cortex. Its subcellular location is the lysosome. The protein resides in the golgi apparatus. The protein localises to the cell membrane. It localises to the cell projection. It is found in the phagocytic cup. Its function is as follows. Required to coordinate membrane tubulation with reorganization of the actin cytoskeleton during endocytosis. Also acts as a link between CDC42 signaling and regulation of the actin cytoskeleton. Binds to lipids such as phosphatidylinositol 4,5-bisphosphate and phosphatidylserine and promotes membrane invagination and the formation of tubules. Also enhances actin polymerization in the vicinity of membrane tubules by recruiting WASL/N-WASP which in turn activates the Arp2/3 complex. Actin polymerization and dynamin may promote the fission of membrane tubules to form endocytic vesicles. Required for the formation of podosomes, actin-rich adhesion structures specific to monocyte-derived cells. Required for translocation of GLUT4 to the plasma membrane in response to insulin signaling. May be required for the lysosomal retention of FASLG/FASL. The sequence is that of Cdc42-interacting protein 4 (Trip10) from Rattus norvegicus (Rat).